The chain runs to 345 residues: Photosystem II protein D1 (345 aa).

3 helical membrane-spanning segments follow: residues 30 to 47 (YVGW…TAAT), 119 to 134 (HFFI…EWEL), and 143 to 157 (WIAV…AASA). H119 is a chlorophyll a binding site. Y127 contacts pheophytin a. [CaMn4O5] cluster-binding residues include D171 and E190. The chain crosses the membrane as a helical span at residues 198–219 (FHMLGVAGVFGGSLFSAMHGSL). Position 199 (H199) interacts with chlorophyll a. Residues H216 and 265 to 266 (SF) each bind a quinone. H216 is a Fe cation binding site. H273 lines the Fe cation pocket. A helical transmembrane segment spans residues 275–289 (FLAVWPVVGIWFTAL). Residues H333, E334, D343, and A345 each contribute to the [CaMn4O5] cluster site.

This sequence belongs to the reaction center PufL/M/PsbA/D family. In terms of assembly, PSII is composed of 1 copy each of membrane proteins PsbA, PsbB, PsbC, PsbD, PsbE, PsbF, PsbH, PsbI, PsbJ, PsbK, PsbL, PsbM, PsbT, PsbY, PsbZ, Psb30/Ycf12, at least 3 peripheral proteins of the oxygen-evolving complex and a large number of cofactors. It forms dimeric complexes. The D1/D2 heterodimer binds P680, chlorophylls that are the primary electron donor of PSII, and subsequent electron acceptors. It shares a non-heme iron and each subunit binds pheophytin, quinone, additional chlorophylls, carotenoids and lipids. D1 provides most of the ligands for the Mn4-Ca-O5 cluster of the oxygen-evolving complex (OEC). There is also a Cl(-1) ion associated with D1 and D2, which is required for oxygen evolution. The PSII complex binds additional chlorophylls, carotenoids and specific lipids. is required as a cofactor. Tyr-162 forms a radical intermediate that is referred to as redox-active TyrZ, YZ or Y-Z.

The protein resides in the plastid. It is found in the chloroplast thylakoid membrane. It catalyses the reaction 2 a plastoquinone + 4 hnu + 2 H2O = 2 a plastoquinol + O2. In terms of biological role, photosystem II (PSII) is a light-driven water:plastoquinone oxidoreductase that uses light energy to abstract electrons from H(2)O, generating O(2) and a proton gradient subsequently used for ATP formation. It consists of a core antenna complex that captures photons, and an electron transfer chain that converts photonic excitation into a charge separation. The D1/D2 (PsbA/PsbD) reaction center heterodimer binds P680, the primary electron donor of PSII as well as several subsequent electron acceptors. This chain is Photosystem II protein D1, found in Euglena gracilis.